The sequence spans 345 residues: Ferrochelatase (345 aa).

His-215 and Glu-296 together coordinate Fe cation.

Belongs to the ferrochelatase family.

It is found in the cytoplasm. The enzyme catalyses heme b + 2 H(+) = protoporphyrin IX + Fe(2+). Its pathway is porphyrin-containing compound metabolism; protoheme biosynthesis; protoheme from protoporphyrin-IX: step 1/1. In terms of biological role, catalyzes the ferrous insertion into protoporphyrin IX. This is Ferrochelatase from Rhodopseudomonas palustris (strain ATCC BAA-98 / CGA009).